The sequence spans 2278 residues: 1-phosphatidylinositol 3-phosphate 5-kinase FAB1 (2278 aa).

Disordered regions lie at residues 1-30 and 76-144; these read MSSE…SVNT and PPTS…LQLP. The residue at position 2 (S2) is an N-acetylserine. The tract at residues 2–676 is required for localization to the vacuole membrane; that stretch reads SSEEPHASIS…NSTKSFQRAQ (675 aa). Composition is skewed to low complexity over residues 18 to 28 and 76 to 89; these read VRSSSTGTSSV and PPTS…TSTS. Over residues 90 to 128 the composition is skewed to polar residues; the sequence is HVTGTASHSNIKANANTSTSVNKKNLPPTTSGRIPSSTI. A Phosphoserine modification is found at S186. The FYVE-type zinc-finger motif lies at 240–299; the sequence is DESSKECFSCGKTFNTFRRKHHCRICGQIFCSSCTLLIDGDRFGCHAKMRVCYNCYEHAD. C246, C249, C262, C265, C270, C273, C291, and C294 together coordinate Zn(2+). 5 disordered regions span residues 302–337, 472–500, 514–534, 556–697, and 727–766; these read EDSS…HSHS, ITIN…NNPA, NSVN…AQSS, FNYN…PNNS, and DSSP…NINT. Residues 472 to 498 show a composition bias toward low complexity; it reads ITINNLNNTTSNNSNYNNTNSNSNINN. Over residues 557–570 the composition is skewed to polar residues; the sequence is NYNSKGPSQQNDTA. Positions 571 to 601 are enriched in low complexity; it reads NGNNDNNNNNNNNNNNNNNNSASGIADNNNI. Residues 602–611 show a composition bias toward polar residues; that stretch reads PSNDNGTTFT. The segment covering 634–644 has biased composition (acidic residues); it reads LNEEDSSEDEG. Over residues 665–679 the composition is skewed to polar residues; it reads MRNSTKSFQRAQASL. Positions 682-692 are enriched in basic residues; that stretch reads MRFRRKSKSKH. Residues 729–741 show a composition bias toward polar residues; it reads SPLQDKASSSAAS. A compositionally biased stretch (low complexity) spans 749–763; the sequence is SNSSGSNNNSNSNSN. The CCT domain stretch occupies residues 766–1039; it reads TDPWKRIASI…KIKQVSEFMV (274 aa). Residues 1181–1500 are CCR domain; that stretch reads SSSQNLLGTG…TAKQLKKLFY (320 aa). A compositionally biased stretch (basic and acidic residues) spans 1506-1554; that stretch reads DSEDKKSLHDEKAKTRKPEKNELPLEGLKDVEKPKIDSKNTTENRDRTN. Residues 1506–1627 form a disordered region; that stretch reads DSEDKKSLHD…TRPNIRKMSS (122 aa). The segment covering 1555–1564 has biased composition (polar residues); the sequence is EPQNAVTITT. Residues 1580-1595 are compositionally biased toward low complexity; sequence LTVTPSASSVSSSLTP. S1627 and S1630 each carry phosphoserine. Positions 1766–1776 are enriched in polar residues; that stretch reads SGKTTASTHLN. Disordered stretches follow at residues 1766 to 1804 and 1891 to 1972; these read SGKT…EPLP and QQQQ…THSQ. The span at 1780-1799 shows a compositional bias: basic and acidic residues; the sequence is VVKETSENPKSIVRESDNSK. The span at 1918–1932 shows a compositional bias: polar residues; it reads DPSVNISPSVSTTSH. The PIPK domain maps to 1932–2266; sequence HNKGRDSEIS…RFREAMERYI (335 aa). A Phosphoserine modification is found at S1938. T1953 carries the phosphothreonine modification.

In terms of assembly, component of the PI(3,5)P2 regulatory complex, composed of ATG18, FIG4, FAB1, VAC14 and VAC7. VAC14 nucleates the assembly of the complex and serves as a scaffold. The cofactor is Mg(2+). It depends on Mn(2+) as a cofactor.

It localises to the vacuole membrane. The protein localises to the endosome membrane. It catalyses the reaction a 1,2-diacyl-sn-glycero-3-phospho-(1D-myo-inositol-3-phosphate) + ATP = a 1,2-diacyl-sn-glycero-3-phospho-(1D-myo-inositol-3,5-bisphosphate) + ADP + H(+). It carries out the reaction 1,2-dihexadecanoyl-sn-glycero-3-phospho-(1D-myo-inositol-3-phosphate) + ATP = 1,2-dihexadecanoyl-sn-glycero-3-phospho-(1D-myo-inositol-3,5-phosphate) + ADP + H(+). With respect to regulation, activated by VAC14 and VAC7. VAC14 acts as a specific osmotic response regulator. Functionally, the PI(3,5)P2 regulatory complex regulates both the synthesis and turnover of phosphatidylinositol 3,5-bisphosphate (PtdIns(3,5)P2). Catalyzes the phosphorylation of phosphatidylinositol 3-phosphate on the fifth hydroxyl of the myo-inositol ring, to form phosphatidylinositol 3,5-bisphosphate. Required for endocytic-vacuolar pathway and nuclear migration. The product of the reaction, PI(3,5)P2 is an important regulator of vacuole homeostasis perhaps by controlling membrane flux to and/or from the vacuole. PI(3,5)P2 regulates the transition between trans-SNARE complex formation and vacuole membrane fusion. Hyperosmotic shock-induced increase in the levels of PtdIns(3,5)P2 requires the presence of VAC7, VAC14, and/or FIG4. The sequence is that of 1-phosphatidylinositol 3-phosphate 5-kinase FAB1 from Saccharomyces cerevisiae (strain ATCC 204508 / S288c) (Baker's yeast).